The chain runs to 403 residues: Phosphopentomutase (403 aa).

Positions 13, 298, 303, 339, 340, and 351 each coordinate Mn(2+).

The protein belongs to the phosphopentomutase family. Mn(2+) is required as a cofactor.

It is found in the cytoplasm. The catalysed reaction is 2-deoxy-alpha-D-ribose 1-phosphate = 2-deoxy-D-ribose 5-phosphate. It carries out the reaction alpha-D-ribose 1-phosphate = D-ribose 5-phosphate. Its pathway is carbohydrate degradation; 2-deoxy-D-ribose 1-phosphate degradation; D-glyceraldehyde 3-phosphate and acetaldehyde from 2-deoxy-alpha-D-ribose 1-phosphate: step 1/2. Functionally, isomerase that catalyzes the conversion of deoxy-ribose 1-phosphate (dRib-1-P) and ribose 1-phosphate (Rib-1-P) to deoxy-ribose 5-phosphate (dRib-5-P) and ribose 5-phosphate (Rib-5-P), respectively. The sequence is that of Phosphopentomutase from Streptococcus pneumoniae (strain Hungary19A-6).